The sequence spans 164 residues: uncharacterized protein (164 aa).

Residues 1 to 129 (MGEVRVVGIR…AVLAQAGLLI (129 aa)) form the BFN domain.

This is an uncharacterized protein from Mycobacterium tuberculosis (strain CDC 1551 / Oshkosh).